The chain runs to 446 residues: ATP-dependent protease ATPase subunit HslU (446 aa).

ATP is bound by residues V18, 60-65, D259, E324, and R396; that span reads GVGKTE.

It belongs to the ClpX chaperone family. HslU subfamily. In terms of assembly, a double ring-shaped homohexamer of HslV is capped on each side by a ring-shaped HslU homohexamer. The assembly of the HslU/HslV complex is dependent on binding of ATP.

It is found in the cytoplasm. ATPase subunit of a proteasome-like degradation complex; this subunit has chaperone activity. The binding of ATP and its subsequent hydrolysis by HslU are essential for unfolding of protein substrates subsequently hydrolyzed by HslV. HslU recognizes the N-terminal part of its protein substrates and unfolds these before they are guided to HslV for hydrolysis. This chain is ATP-dependent protease ATPase subunit HslU, found in Acidovorax ebreus (strain TPSY) (Diaphorobacter sp. (strain TPSY)).